The following is a 263-amino-acid chain: Type-2Bb cytolytic delta-endotoxin (263 aa).

It belongs to the cyt1/cyt2 endotoxin family. In terms of processing, active after proteolytic processing.

Its function is as follows. Kills the larvae of dipteran insects by making pores in the epithelial cell membrane of the insect midgut. This chain is Type-2Bb cytolytic delta-endotoxin (cyt2Bb1), found in Bacillus thuringiensis subsp. jegathesan.